The following is a 65-amino-acid chain: uncharacterized protein (65 aa).

The signal sequence occupies residues 1 to 22 (MKFIKLFTFLVYLFVTLTNVFA).

This is an uncharacterized protein from Invertebrate iridescent virus 6 (IIV-6).